Reading from the N-terminus, the 242-residue chain is DNA repair protein RecO (242 aa).

The protein belongs to the RecO family.

In terms of biological role, involved in DNA repair and RecF pathway recombination. This is DNA repair protein RecO from Vibrio atlanticus (strain LGP32) (Vibrio splendidus (strain Mel32)).